Here is a 66-residue protein sequence, read N- to C-terminus: Beta-mammal toxin Css2 (66 aa).

One can recognise an LCN-type CS-alpha/beta domain in the interval 1–66; the sequence is KEGYLVSKST…VWPLPNKTCN (66 aa). Disulfide bonds link Cys12-Cys65, Cys16-Cys41, Cys25-Cys46, and Cys29-Cys48. Residue Asn66 is modified to Asparagine amide.

This sequence belongs to the long (4 C-C) scorpion toxin superfamily. Sodium channel inhibitor family. Beta subfamily. C-terminal amidation increases its affinity for sodium channels. As to expression, expressed by the venom gland.

The protein localises to the secreted. In terms of biological role, beta toxin that binds site-4 of sodium channels (Nav) and reduces peak current (observed on Nav1.6/SCN8A (IC(50)=307 nM)), shifts the voltage of activation toward more negative potentials (observed on Nav1.6, Nav1.1 (weak), Nav1.2 (weak), and Nav1.7 (weak)), and induces resurgent currents at negative voltages following brief and strong depolarizations (observed on Nav1.6, Nav1.1 (weak), and Nav1.7 (weak)). A reduction of peak current of Nav1.5/SCN7A has been observed in another study (IC(50)=35-40 nM). This toxin is only active on mammals. It has been shown to bind phospholipids. The sequence is that of Beta-mammal toxin Css2 from Centruroides suffusus (Durango bark scorpion).